The chain runs to 495 residues: Putative BTB/POZ domain-containing protein L98 (495 aa).

A BTB domain is found at serine 15–tyrosine 85.

It belongs to the mimivirus BTB/WD family.

This chain is Putative BTB/POZ domain-containing protein L98, found in Acanthamoeba polyphaga (Amoeba).